Consider the following 84-residue polypeptide: Small ribosomal subunit protein bS16 (84 aa).

This sequence belongs to the bacterial ribosomal protein bS16 family.

The sequence is that of Small ribosomal subunit protein bS16 from Koribacter versatilis (strain Ellin345).